Consider the following 456-residue polypeptide: tRNA modification GTPase MnmE (456 aa).

Residues R21, E85, and K124 each coordinate (6S)-5-formyl-5,6,7,8-tetrahydrofolate. The region spanning 220–379 (QLRIVLYGEP…LLDEIQKKAA (160 aa)) is the TrmE-type G domain. N230 contacts K(+). GTP-binding positions include 230-235 (NTGKSS), 249-255 (SEIPGTT), and 274-277 (DTAG). S234 lines the Mg(2+) pocket. K(+) contacts are provided by S249, I251, and T254. Position 255 (T255) interacts with Mg(2+). Residue K456 participates in (6S)-5-formyl-5,6,7,8-tetrahydrofolate binding.

Belongs to the TRAFAC class TrmE-Era-EngA-EngB-Septin-like GTPase superfamily. TrmE GTPase family. Homodimer. Heterotetramer of two MnmE and two MnmG subunits. K(+) is required as a cofactor.

It is found in the cytoplasm. Functionally, exhibits a very high intrinsic GTPase hydrolysis rate. Involved in the addition of a carboxymethylaminomethyl (cmnm) group at the wobble position (U34) of certain tRNAs, forming tRNA-cmnm(5)s(2)U34. This Leptospira borgpetersenii serovar Hardjo-bovis (strain JB197) protein is tRNA modification GTPase MnmE.